The chain runs to 172 residues: Small ribosomal subunit protein bS6 (172 aa).

The disordered stretch occupies residues 100 to 172 (LPAKRVVKTS…ENKEIEKKED (73 aa)). Residues 107–172 (KTSEKNVKED…ENKEIEKKED (66 aa)) show a composition bias toward basic and acidic residues.

This sequence belongs to the bacterial ribosomal protein bS6 family.

Binds together with bS18 to 16S ribosomal RNA. The sequence is that of Small ribosomal subunit protein bS6 from Prochlorococcus marinus (strain MIT 9211).